A 467-amino-acid chain; its full sequence is 3-isopropylmalate dehydratase large subunit (467 aa).

[4Fe-4S] cluster-binding residues include Cys-349, Cys-409, and Cys-412. A disordered region spans residues 422–443 (PGQRSASTSNRNFEGRQGRGGR).

It belongs to the aconitase/IPM isomerase family. LeuC type 1 subfamily. Heterodimer of LeuC and LeuD. [4Fe-4S] cluster serves as cofactor.

The catalysed reaction is (2R,3S)-3-isopropylmalate = (2S)-2-isopropylmalate. The protein operates within amino-acid biosynthesis; L-leucine biosynthesis; L-leucine from 3-methyl-2-oxobutanoate: step 2/4. Its function is as follows. Catalyzes the isomerization between 2-isopropylmalate and 3-isopropylmalate, via the formation of 2-isopropylmaleate. In Paramagnetospirillum magneticum (strain ATCC 700264 / AMB-1) (Magnetospirillum magneticum), this protein is 3-isopropylmalate dehydratase large subunit.